A 906-amino-acid chain; its full sequence is Putative disease resistance protein At1g59780 (906 aa).

Positions K20–T59 form a coiled coil. One can recognise an NB-ARC domain in the interval S138–Y452. ATP is bound at residue G187–T194. LRR repeat units follow at residues L572–L597, H599–N619, L620–E644, and M825–S850.

Belongs to the disease resistance NB-LRR family.

Potential disease resistance protein. The protein is Putative disease resistance protein At1g59780 of Arabidopsis thaliana (Mouse-ear cress).